The sequence spans 666 residues: Threonine--tRNA ligase (666 aa).

One can recognise a TGS domain in the interval 1-64; that stretch reads MSDTVSLTFP…VDGKIEIVTR (64 aa). Residues 245–553 are catalytic; the sequence is DHRKLGREMD…LIENFAGHMP (309 aa). Zn(2+) contacts are provided by cysteine 347, histidine 398, and histidine 530.

It belongs to the class-II aminoacyl-tRNA synthetase family. In terms of assembly, homodimer. It depends on Zn(2+) as a cofactor.

It localises to the cytoplasm. The enzyme catalyses tRNA(Thr) + L-threonine + ATP = L-threonyl-tRNA(Thr) + AMP + diphosphate + H(+). Functionally, catalyzes the attachment of threonine to tRNA(Thr) in a two-step reaction: L-threonine is first activated by ATP to form Thr-AMP and then transferred to the acceptor end of tRNA(Thr). Also edits incorrectly charged L-seryl-tRNA(Thr). The sequence is that of Threonine--tRNA ligase from Allorhizobium ampelinum (strain ATCC BAA-846 / DSM 112012 / S4) (Agrobacterium vitis (strain S4)).